The following is a 1100-amino-acid chain: DNA-directed RNA polymerase subunit beta (1100 aa).

Positions 1064 to 1100 (YEEDKEVDLMADVNQRRTPSRPTYESMSVGDIDDDDD) are disordered. The span at 1079–1089 (RRTPSRPTYES) shows a compositional bias: polar residues.

Belongs to the RNA polymerase beta chain family. In cyanobacteria the RNAP catalytic core is composed of 2 alpha, 1 beta, 1 beta', 1 gamma and 1 omega subunit. When a sigma factor is associated with the core the holoenzyme is formed, which can initiate transcription.

The enzyme catalyses RNA(n) + a ribonucleoside 5'-triphosphate = RNA(n+1) + diphosphate. In terms of biological role, DNA-dependent RNA polymerase catalyzes the transcription of DNA into RNA using the four ribonucleoside triphosphates as substrates. The chain is DNA-directed RNA polymerase subunit beta from Synechococcus sp. (strain ATCC 27144 / PCC 6301 / SAUG 1402/1) (Anacystis nidulans).